The primary structure comprises 173 residues: Translation initiation factor IF-3 (173 aa).

Belongs to the IF-3 family. As to quaternary structure, monomer.

The protein resides in the cytoplasm. In terms of biological role, IF-3 binds to the 30S ribosomal subunit and shifts the equilibrium between 70S ribosomes and their 50S and 30S subunits in favor of the free subunits, thus enhancing the availability of 30S subunits on which protein synthesis initiation begins. This chain is Translation initiation factor IF-3, found in Methylorubrum extorquens (strain CM4 / NCIMB 13688) (Methylobacterium extorquens).